The primary structure comprises 409 residues: LL-diaminopimelate aminotransferase (409 aa).

Residues Tyr-15 and Gly-42 each coordinate substrate. Residues Tyr-72, 108-109 (AK), Tyr-132, Asn-186, Tyr-217, and 245-247 (SFS) each bind pyridoxal 5'-phosphate. The substrate site is built by Lys-109, Tyr-132, and Asn-186. The residue at position 248 (Lys-248) is an N6-(pyridoxal phosphate)lysine. Positions 256 and 291 each coordinate pyridoxal 5'-phosphate. Substrate-binding residues include Asn-291 and Arg-387.

It belongs to the class-I pyridoxal-phosphate-dependent aminotransferase family. LL-diaminopimelate aminotransferase subfamily. As to quaternary structure, homodimer. Requires pyridoxal 5'-phosphate as cofactor.

It carries out the reaction (2S,6S)-2,6-diaminopimelate + 2-oxoglutarate = (S)-2,3,4,5-tetrahydrodipicolinate + L-glutamate + H2O + H(+). It functions in the pathway amino-acid biosynthesis; L-lysine biosynthesis via DAP pathway; LL-2,6-diaminopimelate from (S)-tetrahydrodipicolinate (aminotransferase route): step 1/1. Functionally, involved in the synthesis of meso-diaminopimelate (m-DAP or DL-DAP), required for both lysine and peptidoglycan biosynthesis. Catalyzes the direct conversion of tetrahydrodipicolinate to LL-diaminopimelate. The sequence is that of LL-diaminopimelate aminotransferase from Parabacteroides distasonis (strain ATCC 8503 / DSM 20701 / CIP 104284 / JCM 5825 / NCTC 11152).